The sequence spans 447 residues: Folate synthesis bifunctional protein (447 aa).

Positions 1–165 (MTTAQFICLS…SFGEIAHLLP (165 aa)) are HPPK. A Pterin-binding domain is found at 179–438 (TLLMGVVNVT…DVEANQRVLS (260 aa)). The tract at residues 181-447 (LMGVVNVTDN…SAAAWSGVHV (267 aa)) is DHPS. Residue Asn-186 coordinates Mg(2+). Residues Thr-226, Asp-266, Asn-286, Asp-356, Lys-392, and 426 to 428 (RVH) contribute to the (7,8-dihydropterin-6-yl)methyl diphosphate site.

This sequence in the C-terminal section; belongs to the DHPS family. The protein in the N-terminal section; belongs to the HPPK family. Mg(2+) serves as cofactor.

It carries out the reaction 6-hydroxymethyl-7,8-dihydropterin + ATP = (7,8-dihydropterin-6-yl)methyl diphosphate + AMP + H(+). The enzyme catalyses (7,8-dihydropterin-6-yl)methyl diphosphate + 4-aminobenzoate = 7,8-dihydropteroate + diphosphate. It participates in cofactor biosynthesis; tetrahydrofolate biosynthesis; 2-amino-4-hydroxy-6-hydroxymethyl-7,8-dihydropteridine diphosphate from 7,8-dihydroneopterin triphosphate: step 4/4. It functions in the pathway cofactor biosynthesis; tetrahydrofolate biosynthesis; 7,8-dihydrofolate from 2-amino-4-hydroxy-6-hydroxymethyl-7,8-dihydropteridine diphosphate and 4-aminobenzoate: step 1/2. The protein is Folate synthesis bifunctional protein (folKP) of Chlamydia caviae (strain ATCC VR-813 / DSM 19441 / 03DC25 / GPIC) (Chlamydophila caviae).